Reading from the N-terminus, the 90-residue chain is uncharacterized protein (90 aa).

Residues 12–32 (VVGGLSFWSFSAGVIMIVNAF) traverse the membrane as a helical segment.

It localises to the membrane. This is an uncharacterized protein from Mycoplasma pneumoniae (strain ATCC 29342 / M129 / Subtype 1) (Mycoplasmoides pneumoniae).